A 567-amino-acid chain; its full sequence is 2-succinyl-5-enolpyruvyl-6-hydroxy-3-cyclohexene-1-carboxylate synthase (567 aa).

It belongs to the TPP enzyme family. MenD subfamily. As to quaternary structure, homodimer. Mg(2+) is required as a cofactor. It depends on Mn(2+) as a cofactor. Thiamine diphosphate serves as cofactor.

It catalyses the reaction isochorismate + 2-oxoglutarate + H(+) = 5-enolpyruvoyl-6-hydroxy-2-succinyl-cyclohex-3-ene-1-carboxylate + CO2. The protein operates within quinol/quinone metabolism; 1,4-dihydroxy-2-naphthoate biosynthesis; 1,4-dihydroxy-2-naphthoate from chorismate: step 2/7. It functions in the pathway quinol/quinone metabolism; menaquinone biosynthesis. Catalyzes the thiamine diphosphate-dependent decarboxylation of 2-oxoglutarate and the subsequent addition of the resulting succinic semialdehyde-thiamine pyrophosphate anion to isochorismate to yield 2-succinyl-5-enolpyruvyl-6-hydroxy-3-cyclohexene-1-carboxylate (SEPHCHC). The protein is 2-succinyl-5-enolpyruvyl-6-hydroxy-3-cyclohexene-1-carboxylate synthase of Yersinia pestis bv. Antiqua (strain Angola).